Reading from the N-terminus, the 112-residue chain is uncharacterized protein (112 aa).

The helical transmembrane segment at 85 to 105 threads the bilayer; that stretch reads IVQLIILFAIIITNPNAIELI.

Belongs to the M.jannaschii MJ0023/MJ0349/MJ1072/MJ1074/MJ1107/MJECL16 family.

The protein localises to the membrane. This is an uncharacterized protein from Methanocaldococcus jannaschii (strain ATCC 43067 / DSM 2661 / JAL-1 / JCM 10045 / NBRC 100440) (Methanococcus jannaschii).